A 64-amino-acid polypeptide reads, in one-letter code: Disintegrin VB7B (64 aa).

Positions 1–64 (ELLQNSGNPC…TGISSDCPRN (64 aa)) constitute a Disintegrin domain. Cystine bridges form between cysteine 10–cysteine 33, cysteine 24–cysteine 30, cysteine 29–cysteine 54, and cysteine 42–cysteine 61. A Cell attachment site; atypical (KGD) motif is present at residues 46–48 (KGD).

It belongs to the venom metalloproteinase (M12B) family. P-II subfamily. P-IIe sub-subfamily. Heterodimer with VB7A; disulfide-linked. Expressed by the venom gland.

It localises to the secreted. Its function is as follows. Poor inhibitor of platelet aggregation. The disintegrin inhibits the adhesion of cells expressing the RGD-dependent integrin alpha-5/beta-1 (ITGA5/ITGB1) to immobilized fibronectin. Inhibition on alpha-IIb/beta-3 (ITGA2B/ITGB3) is low. This Vipera berus berus (Common viper) protein is Disintegrin VB7B.